The following is a 278-amino-acid chain: Large ribosomal subunit protein uL2 (278 aa).

Disordered stretches follow at residues 29–53 and 223–278; these read PEKSLVRPLSKTGGRNSSGRITTRH and GVAM…GKKR. The segment covering 255 to 268 has biased composition (basic and acidic residues); the sequence is GRTRRPGKESDKLI. The segment covering 269 to 278 has biased composition (basic residues); that stretch reads VRRRRTGKKR.

The protein belongs to the universal ribosomal protein uL2 family. Part of the 50S ribosomal subunit. Forms a bridge to the 30S subunit in the 70S ribosome.

In terms of biological role, one of the primary rRNA binding proteins. Required for association of the 30S and 50S subunits to form the 70S ribosome, for tRNA binding and peptide bond formation. It has been suggested to have peptidyltransferase activity; this is somewhat controversial. Makes several contacts with the 16S rRNA in the 70S ribosome. The chain is Large ribosomal subunit protein uL2 from Kineococcus radiotolerans (strain ATCC BAA-149 / DSM 14245 / SRS30216).